Consider the following 151-residue polypeptide: 3-dehydroquinate dehydratase (151 aa).

Residue Tyr24 is the Proton acceptor of the active site. Substrate contacts are provided by Asn76, His82, and Asp89. Residue His102 is the Proton donor of the active site. Residues Val103–Ser104 and Arg113 contribute to the substrate site.

It belongs to the type-II 3-dehydroquinase family. In terms of assembly, homododecamer.

The enzyme catalyses 3-dehydroquinate = 3-dehydroshikimate + H2O. It participates in metabolic intermediate biosynthesis; chorismate biosynthesis; chorismate from D-erythrose 4-phosphate and phosphoenolpyruvate: step 3/7. Functionally, catalyzes a trans-dehydration via an enolate intermediate. The sequence is that of 3-dehydroquinate dehydratase from Rhodopseudomonas palustris (strain BisA53).